Consider the following 226-residue polypeptide: MKFAVIQFPGSNCDFDLLWAIRDVMGAEAEFVWHDEKSLAGFDGVLIPGGFSYGDYLRCGAIASFANIMPEIKRLAKEGKPVFGTCNGFQILVESGLLPGVLIRNEGLKFVSKWQVLKVENNQSNFTTEYAKDALINLPIAHGEGQYVADEATLAELKENGQIVFTYADENPNGSVENIAGIINKEGNVLGMMPHPERAMEELLGGADGRKMFASLLKNFLVTVKN.

The Glutamine amidotransferase type-1 domain maps to Lys2 to Asn226. Catalysis depends on Cys86, which acts as the Nucleophile. Catalysis depends on residues His195 and Glu197.

In terms of assembly, part of the FGAM synthase complex composed of 1 PurL, 1 PurQ and 2 PurS subunits.

The protein resides in the cytoplasm. It carries out the reaction N(2)-formyl-N(1)-(5-phospho-beta-D-ribosyl)glycinamide + L-glutamine + ATP + H2O = 2-formamido-N(1)-(5-O-phospho-beta-D-ribosyl)acetamidine + L-glutamate + ADP + phosphate + H(+). The catalysed reaction is L-glutamine + H2O = L-glutamate + NH4(+). Its pathway is purine metabolism; IMP biosynthesis via de novo pathway; 5-amino-1-(5-phospho-D-ribosyl)imidazole from N(2)-formyl-N(1)-(5-phospho-D-ribosyl)glycinamide: step 1/2. Its function is as follows. Part of the phosphoribosylformylglycinamidine synthase complex involved in the purines biosynthetic pathway. Catalyzes the ATP-dependent conversion of formylglycinamide ribonucleotide (FGAR) and glutamine to yield formylglycinamidine ribonucleotide (FGAM) and glutamate. The FGAM synthase complex is composed of three subunits. PurQ produces an ammonia molecule by converting glutamine to glutamate. PurL transfers the ammonia molecule to FGAR to form FGAM in an ATP-dependent manner. PurS interacts with PurQ and PurL and is thought to assist in the transfer of the ammonia molecule from PurQ to PurL. This Lactococcus lactis subsp. cremoris (Streptococcus cremoris) protein is Phosphoribosylformylglycinamidine synthase subunit PurQ.